The following is a 272-amino-acid chain: 3-methyl-2-oxobutanoate hydroxymethyltransferase (272 aa).

Mg(2+)-binding residues include Asp51 and Asp90. 3-methyl-2-oxobutanoate contacts are provided by residues 51–52 (DS), Asp90, and Lys118. Residue Glu120 coordinates Mg(2+). Catalysis depends on Glu187, which acts as the Proton acceptor.

Belongs to the PanB family. As to quaternary structure, homodecamer; pentamer of dimers. The cofactor is Mg(2+).

Its subcellular location is the cytoplasm. It catalyses the reaction 3-methyl-2-oxobutanoate + (6R)-5,10-methylene-5,6,7,8-tetrahydrofolate + H2O = 2-dehydropantoate + (6S)-5,6,7,8-tetrahydrofolate. It functions in the pathway cofactor biosynthesis; (R)-pantothenate biosynthesis; (R)-pantoate from 3-methyl-2-oxobutanoate: step 1/2. Functionally, catalyzes the reversible reaction in which hydroxymethyl group from 5,10-methylenetetrahydrofolate is transferred onto alpha-ketoisovalerate to form ketopantoate. This chain is 3-methyl-2-oxobutanoate hydroxymethyltransferase, found in Xylella fastidiosa (strain M23).